The following is a 72-amino-acid chain: Sperm protein associated with the nucleus on the X chromosome N1 (72 aa).

The tract at residues 1 to 40 (MEKPTSSTNGEKRKSPCDSNNKNDEMQETPNRDLVLEPSL) is disordered. Over residues 10–35 (GEKRKSPCDSNNKNDEMQETPNRDLV) the composition is skewed to basic and acidic residues.

The protein belongs to the SPAN-X family.

This is Sperm protein associated with the nucleus on the X chromosome N1 (SPANXN1) from Gorilla gorilla gorilla (Western lowland gorilla).